We begin with the raw amino-acid sequence, 363 residues long: Phosphoserine aminotransferase (363 aa).

Residue Arg42 coordinates L-glutamate. Residues 76–77 (GR), Trp102, Thr156, Asp175, and Gln198 contribute to the pyridoxal 5'-phosphate site. Position 199 is an N6-(pyridoxal phosphate)lysine (Lys199). A pyridoxal 5'-phosphate-binding site is contributed by 240–241 (NT).

It belongs to the class-V pyridoxal-phosphate-dependent aminotransferase family. SerC subfamily. Homodimer. Requires pyridoxal 5'-phosphate as cofactor.

Its subcellular location is the cytoplasm. It carries out the reaction O-phospho-L-serine + 2-oxoglutarate = 3-phosphooxypyruvate + L-glutamate. The enzyme catalyses 4-(phosphooxy)-L-threonine + 2-oxoglutarate = (R)-3-hydroxy-2-oxo-4-phosphooxybutanoate + L-glutamate. It functions in the pathway amino-acid biosynthesis; L-serine biosynthesis; L-serine from 3-phospho-D-glycerate: step 2/3. Its pathway is cofactor biosynthesis; pyridoxine 5'-phosphate biosynthesis; pyridoxine 5'-phosphate from D-erythrose 4-phosphate: step 3/5. Catalyzes the reversible conversion of 3-phosphohydroxypyruvate to phosphoserine and of 3-hydroxy-2-oxo-4-phosphonooxybutanoate to phosphohydroxythreonine. The protein is Phosphoserine aminotransferase of Shewanella sp. (strain MR-7).